The primary structure comprises 623 residues: uncharacterized protein (623 aa).

The next 5 helical transmembrane spans lie at 242-262, 288-308, 318-338, 361-381, and 387-407; these read IVLA…ITWL, IVSP…LDIF, VSMW…IALF, VINL…LLGV, and FNVS…ALAV.

It belongs to the MscS (TC 1.A.23) family.

Its subcellular location is the cell membrane. This is an uncharacterized protein from Helicobacter pylori (strain ATCC 700392 / 26695) (Campylobacter pylori).